The primary structure comprises 524 residues: Cytochrome P450 monooxygenase ATR4 (524 aa).

A helical transmembrane segment spans residues 13–36 (IITYLDSLTWVGMALPLFSLCWAI). N-linked (GlcNAc...) asparagine glycosylation is found at Asn-291, Asn-444, and Asn-454.

This sequence belongs to the cytochrome P450 family. Heme is required as a cofactor.

It localises to the membrane. Its pathway is mycotoxin biosynthesis. Functionally, cytochrome P450 monooxygenase; part of the core atranone cluster (CAC) which products are predicted to catalyze most or all steps of mycotoxin atranone synthesis, starting from geranylgeranyl pyrophosphate (GGPP). The initial cyclization of GGPP to dolabellane is probably performed by the terpene cyclase ATR13. The Baeyer-Villiger oxidation near the end of the atranone synthesis, which converts atranones D and E to atranones F and G is predicted to be catalyzed by the monooxygenase ATR8. Of the CAC's other predicted gene products, the reducing PKS ATR6 might synthesize a polyketide chain. This polyketide is probably transferred onto the atranone backbone by the polyketide transferase ATR5. Other predicted CAC products include 4 oxygenases (ATR2, ATR3, ATR4, and ATR14), 3 short-chain reductases (ATR7, ATR9, and ATR10), and a methyltransferase (ATR12). These may all be involved in the various steps of atranone biosynthesis, although their specific roles must await experimental determination. This chain is Cytochrome P450 monooxygenase ATR4, found in Stachybotrys chlorohalonatus (strain IBT 40285).